A 543-amino-acid polypeptide reads, in one-letter code: NADH-ubiquinone oxidoreductase chain 4 (543 aa).

14 helical membrane passes run 5–25, 84–104, 129–149, 161–181, 182–202, 213–233, 254–274, 287–307, 321–341, 350–370, 377–397, 416–436, 456–476, and 501–521; these read FLMF…IIWS, VVAF…YILF, VDGI…IALM, SYLI…LVLD, ILLF…LIGL, FYIF…ILTM, IQIF…PTIF, PLGG…YGIF, YTYI…FSTL, IAYS…SNTI, ILLG…VGGV, MAPL…GVPL, LLGL…IFLF, and FYAL…PSII.

It belongs to the complex I subunit 4 family.

It localises to the mitochondrion membrane. It carries out the reaction a ubiquinone + NADH + 5 H(+)(in) = a ubiquinol + NAD(+) + 4 H(+)(out). Its function is as follows. Core subunit of the mitochondrial membrane respiratory chain NADH dehydrogenase (Complex I) that is believed to belong to the minimal assembly required for catalysis. Complex I functions in the transfer of electrons from NADH to the respiratory chain. The immediate electron acceptor for the enzyme is believed to be ubiquinone. The chain is NADH-ubiquinone oxidoreductase chain 4 (ndh-4) from Neurospora crassa (strain ATCC 24698 / 74-OR23-1A / CBS 708.71 / DSM 1257 / FGSC 987).